The chain runs to 137 residues: MPNFAGTWKMRSSENFDELLKALGVNAMLRKVAVAAASKPHVEIRQDGDQFYIKTSTTVRTTEINFKIGESFEEETVDGRKCRSLATWENENKIYCKQTLIEGDGPKTYWTRELANDELILTFGADDVVCTRIYVRE.

A Nuclear localization signal motif is present at residues K21 to K31. Position 132–134 (R132–Y134) interacts with all-trans-retinoate.

Belongs to the calycin superfamily. Fatty-acid binding protein (FABP) family.

It localises to the cytoplasm. Cytosolic CRABPs may regulate the access of retinoic acid to the nuclear retinoic acid receptors. The protein is Cellular retinoic acid-binding protein 1 (CRABP1) of Gallus gallus (Chicken).